Consider the following 301-residue polypeptide: Asialoglycoprotein receptor 2 (301 aa).

The segment at 1–29 (MEKDFQDIQQLDSEENDHQLIGDEEQGSH) is disordered. Residues 1 to 58 (MEKDFQDIQQLDSEENDHQLIGDEEQGSHVQNLRTENPRWGGQPPSRPFPQRLCSKFR) lie on the Cytoplasmic side of the membrane. At Ser13 the chain carries Phosphoserine. Cys54 carries the S-palmitoyl cysteine lipid modification. A helical; Signal-anchor for type II membrane protein transmembrane segment spans residues 59–79 (LSLLALAFNILLLVVICVVSS). Residues 80 to 301 (QSMQLQKEFW…ACERKRDITY (222 aa)) are Extracellular-facing. Asn97, Asn119, and Asn165 each carry an N-linked (GlcNAc...) asparagine glycan. The 127-residue stretch at 169–295 (CCPVNWVEFG…QQVNRWACER (127 aa)) folds into the C-type lectin domain. Disulfide bonds link Cys170–Cys181, Cys198–Cys293, and Cys271–Cys285.

In terms of assembly, interacts with LASS2. In terms of tissue distribution, expressed exclusively in hepatic parenchymal cells.

Its subcellular location is the membrane. In terms of biological role, mediates the endocytosis of plasma glycoproteins to which the terminal sialic acid residue on their complex carbohydrate moieties has been removed. The receptor recognizes terminal galactose and N-acetylgalactosamine units. After ligand binding to the receptor, the resulting complex is internalized and transported to a sorting organelle, where receptor and ligand are disassociated. The receptor then returns to the cell membrane surface. This is Asialoglycoprotein receptor 2 (Asgr2) from Rattus norvegicus (Rat).